A 196-amino-acid polypeptide reads, in one-letter code: Ankyrin repeat domain-containing protein 66 (196 aa).

ANK repeat units lie at residues 7–37, 43–72, and 76–105; these read SDMTKLHQAVAAGDYSLVKKILKKGLCDPNY, NDRTPLHWAAIKGQMEVIRLLIEYGARPCL, and VGWTPAHFAAEAGHLNILKTLHALHAAIDA. A disordered region spans residues 152 to 196; that stretch reads ERDEDWDAKKRELELSLPSLNQNMNKKNKKSRGPTRPSNTKGRRV. The segment covering 187 to 196 has biased composition (polar residues); it reads RPSNTKGRRV.

In Homo sapiens (Human), this protein is Ankyrin repeat domain-containing protein 66 (ANKRD66).